The following is a 574-amino-acid chain: Choline transporter-like protein ctl1 (574 aa).

N-linked (GlcNAc...) asparagine glycosylation is found at asparagine 40 and asparagine 101. The next 8 membrane-spanning stretches (helical) occupy residues 144-164 (WGLT…LMVW), 189-209 (KDAI…VAIP), 211-231 (FLYF…VYLL), 246-266 (LMLL…YYVW), 291-311 (QITL…FIWV), 336-356 (WVLA…FHAL), 396-416 (YGLC…LHFL), and 434-456 (TSAS…VPYM). Asparagine 457 carries an N-linked (GlcNAc...) asparagine glycan. 2 helical membrane-spanning segments follow: residues 485–505 (LLAA…NYSI) and 511–531 (FYGY…IGAI). Residue asparagine 558 is glycosylated (N-linked (GlcNAc...) asparagine).

This sequence belongs to the CTL (choline transporter-like) family. As to quaternary structure, interacts with atg9.

Its subcellular location is the endoplasmic reticulum membrane. It localises to the preautophagosomal structure membrane. Required for the normal organization of the preautophagosomal structure (PAS) and for the correct subcellular location of atg9. This chain is Choline transporter-like protein ctl1 (ctl1), found in Schizosaccharomyces pombe (strain 972 / ATCC 24843) (Fission yeast).